Reading from the N-terminus, the 117-residue chain is Big defensin (117 aa).

The signal sequence occupies residues 1 to 23 (MKGNIGIAVFYMLLLLLPTDSIG). The propeptide occupies 26 to 36 (MEEEQEKLFRQ). 3 cysteine pairs are disulfide-bonded: Cys-83–Cys-113, Cys-90–Cys-108, and Cys-94–Cys-114.

The protein belongs to the big defensin family. In terms of assembly, interacts with intracellular coagulation inhibitor 1/LICI-1. As to expression, expressed in all tissues examined, including hemocytes, heart, hepatopancreas, stomach, intestine and skeletal muscle.

The protein localises to the secreted. Functionally, significantly inhibits the growth of Gram-negative and Gram-positive bacteria and fungi in vitro. The sequence is that of Big defensin from Tachypleus tridentatus (Japanese horseshoe crab).